Here is a 366-residue protein sequence, read N- to C-terminus: Galactoside alpha-(1,2)-fucosyltransferase 1 (366 aa).

The Cytoplasmic segment spans residues 1 to 8 (MWPPSHRQ). The helical; Signal-anchor for type II membrane protein transmembrane segment at 9–25 (LCRAFLLVCVFSVISFF) threads the bilayer. The Lumenal segment spans residues 26–366 (LHIHQDSFPH…LSPLWTLAKP (341 aa)). 3 N-linked (GlcNAc...) asparagine glycosylation sites follow: N66, N302, and N328.

Belongs to the glycosyltransferase 11 family.

Its subcellular location is the golgi apparatus. The protein resides in the golgi stack membrane. The catalysed reaction is a beta-D-galactosyl-(1-&gt;4)-N-acetyl-beta-D-glucosaminyl derivative + GDP-beta-L-fucose = an alpha-L-Fuc-(1-&gt;2)-beta-D-Gal-(1-&gt;4)-beta-D-GlcNAc derivative + GDP + H(+). The enzyme catalyses a ganglioside GA1 + GDP-beta-L-fucose = a ganglioside Fuc-GA1 + GDP + H(+). It catalyses the reaction a beta-D-Gal-(1-&gt;3)-beta-D-GlcNAc-(1-&gt;3)-beta-D-Gal-(1-&gt;4)-beta-D-Glc-(1&lt;-&gt;1')-Cer(d18:1(4E)) + GDP-beta-L-fucose = alpha-L-fucosyl-(1-&gt;2)- beta-D-galactosyl-(1-&gt;3)-N-acetyl-beta-D-glucosaminyl-(1-&gt;3)-beta-D-galactosyl-(1-&gt;4)-beta-D-glucosyl-(1&lt;-&gt;1')-N-acylsphing-4-enine + GDP + H(+). It carries out the reaction a neolactoside nLc4Cer(d18:1(4E)) + GDP-beta-L-fucose = a neolactoside IV(2)-alpha-Fuc-nLc4Cer(d18:1(4E)) + GDP + H(+). The catalysed reaction is a ganglioside GM1 + GDP-beta-L-fucose = a ganglioside Fuc-GM1 + GDP + H(+). The enzyme catalyses beta-D-galactosyl-(1-&gt;3)-N-acetyl-D-galactosamine + GDP-beta-L-fucose = alpha-L-fucosyl-(1-&gt;2)-beta-D-galactosyl-(1-&gt;3)-N-acetyl-D-galactosamine + GDP + H(+). It participates in protein modification; protein glycosylation. Catalyzes the transfer of L-fucose, from a guanosine diphosphate-beta-L-fucose, to the terminal galactose residue of glycoconjugates through an alpha(1,2) linkage leading to H antigen synthesis that is an intermediate substrate in the synthesis of ABO blood group antigens. H antigen is essential for maturation of the glomerular layer of the main olfactory bulb, in cell migration and early cell-cell contacts during tumor associated angiogenesis. Preferentially fucosylates soluble lactose and to a lesser extent fucosylates glycolipids gangliosides GA1 and GM1a. This chain is Galactoside alpha-(1,2)-fucosyltransferase 1, found in Gorilla gorilla gorilla (Western lowland gorilla).